The sequence spans 92 residues: DNA-directed RNA polymerase subunit Rpo11 (92 aa).

Belongs to the archaeal Rpo11/eukaryotic RPB11/RPC19 RNA polymerase subunit family. Part of the RNA polymerase complex.

Its subcellular location is the cytoplasm. The enzyme catalyses RNA(n) + a ribonucleoside 5'-triphosphate = RNA(n+1) + diphosphate. Its function is as follows. DNA-dependent RNA polymerase (RNAP) catalyzes the transcription of DNA into RNA using the four ribonucleoside triphosphates as substrates. The polypeptide is DNA-directed RNA polymerase subunit Rpo11 (Pyrobaculum aerophilum (strain ATCC 51768 / DSM 7523 / JCM 9630 / CIP 104966 / NBRC 100827 / IM2)).